The following is a 432-amino-acid chain: 23S rRNA (uracil(1939)-C(5))-methyltransferase RlmD (432 aa).

A TRAM domain is found at 1–53; sequence MPIGKIESLDHEARGITRQEGKAIFVDGALPGETVEYASFRRKSKFELAHLVH. Residues Cys-66, Cys-72, Cys-75, and Cys-154 each coordinate [4Fe-4S] cluster. Residues Gln-263, Phe-292, Asn-297, Glu-313, Asn-341, and Asp-362 each coordinate S-adenosyl-L-methionine. Residue Cys-388 is the Nucleophile of the active site.

This sequence belongs to the class I-like SAM-binding methyltransferase superfamily. RNA M5U methyltransferase family. RlmD subfamily.

It catalyses the reaction uridine(1939) in 23S rRNA + S-adenosyl-L-methionine = 5-methyluridine(1939) in 23S rRNA + S-adenosyl-L-homocysteine + H(+). In terms of biological role, catalyzes the formation of 5-methyl-uridine at position 1939 (m5U1939) in 23S rRNA. The sequence is that of 23S rRNA (uracil(1939)-C(5))-methyltransferase RlmD from Dechloromonas aromatica (strain RCB).